The following is a 210-amino-acid chain: Outer-membrane lipoprotein LolB (210 aa).

The first 29 residues, 1 to 29 (MSLISNNEERSLRVRYCIAIALSALLISG), serve as a signal peptide directing secretion. Residue Cys-30 is the site of N-palmitoyl cysteine attachment. Cys-30 carries S-diacylglycerol cysteine lipidation.

It belongs to the LolB family. As to quaternary structure, monomer.

The protein resides in the cell outer membrane. Functionally, plays a critical role in the incorporation of lipoproteins in the outer membrane after they are released by the LolA protein. This chain is Outer-membrane lipoprotein LolB, found in Coxiella burnetii (strain CbuG_Q212) (Coxiella burnetii (strain Q212)).